The following is a 326-amino-acid chain: NAD kinase (326 aa).

Asp93 acts as the Proton acceptor in catalysis. NAD(+)-binding positions include 93 to 94 (DG), Arg98, 171 to 172 (NE), Arg182, Asp201, and 212 to 217 (TAHAFS).

This sequence belongs to the NAD kinase family. It depends on a divalent metal cation as a cofactor.

The protein localises to the cytoplasm. The catalysed reaction is NAD(+) + ATP = ADP + NADP(+) + H(+). Involved in the regulation of the intracellular balance of NAD and NADP, and is a key enzyme in the biosynthesis of NADP. Catalyzes specifically the phosphorylation on 2'-hydroxyl of the adenosine moiety of NAD to yield NADP. The chain is NAD kinase from Thermobifida fusca (strain YX).